A 374-amino-acid chain; its full sequence is uncharacterized protein (374 aa).

A coiled-coil region spans residues 39-66; that stretch reads RDVRKHLESRDAKQELIDSLEEAVRDSR.

This is an uncharacterized protein from Mycobacterium tuberculosis (strain CDC 1551 / Oshkosh).